We begin with the raw amino-acid sequence, 264 residues long: SPARC (264 aa).

The N-terminal stretch at 1-16 (MRYALAACLLLLAASS) is a signal peptide. Residues 52-74 (PCEDHQCGWGKECVVGKKGEPTC) enclose the Follistatin-like domain. 7 disulfide bridges follow: C53–C64, C58–C74, C76–C110, C80–C103, C92–C135, C141–C228, and C236–C252. Residues 68–137 (KKGEPTCECI…HLEYLGECKK (70 aa)) form the Kazal-like domain. N96 is a glycosylation site (N-linked (GlcNAc...) asparagine). One can recognise an EF-hand domain in the interval 224–259 (PMESCIKPFLEGCDANNDGNISIKEWGKCLGLKEGE). Residues D237, N239, D241, N243, and E248 each contribute to the Ca(2+) site. Residue N243 is glycosylated (N-linked (GlcNAc...) asparagine).

Belongs to the SPARC family. As to expression, expressed by body wall and sex muscle cells. Probable association with basement membranes.

It is found in the secreted. The protein localises to the extracellular space. It localises to the extracellular matrix. Its subcellular location is the basement membrane. Has a high affinity for collagen. Affects nematode body morphology and mobility. Essential for C.elegans development and muscle function. The cysteine-rich region could have protease inhibitory activity or may provide the framework for a protein binding module. Probable role in skeletal morphogenesis. This Caenorhabditis elegans protein is SPARC (ost-1).